A 273-amino-acid polypeptide reads, in one-letter code: Large ribosomal subunit protein uL2 (273 aa).

Residues 222–273 (GMAMNPVDHPHGGGEGRNKGIQPVSPWGTPAKGYRTRSNKRTDKYIVRRRNK) are disordered. The span at 229-239 (DHPHGGGEGRN) shows a compositional bias: basic and acidic residues.

This sequence belongs to the universal ribosomal protein uL2 family. As to quaternary structure, part of the 50S ribosomal subunit. Forms a bridge to the 30S subunit in the 70S ribosome.

Its function is as follows. One of the primary rRNA binding proteins. Required for association of the 30S and 50S subunits to form the 70S ribosome, for tRNA binding and peptide bond formation. It has been suggested to have peptidyltransferase activity; this is somewhat controversial. Makes several contacts with the 16S rRNA in the 70S ribosome. In Tolumonas auensis (strain DSM 9187 / NBRC 110442 / TA 4), this protein is Large ribosomal subunit protein uL2.